The chain runs to 211 residues: 5,6-dimethylbenzimidazole synthase (211 aa).

FMN is bound by residues 22-26 (RRDVR), Ser-50, Leu-99, and Ser-158.

It belongs to the BluB family. In terms of assembly, homooctamer.

The enzyme catalyses FMNH2 + O2 = dialurate + 5,6-dimethylbenzimidazole + D-erythrose 4-phosphate + H(+). Involved in the biosynthesis of cobalamin (vitamin B12). Catalyzes the oxidative fragmentation and contraction of the isoalloxazine heterocycle and the cleavage of the ribityl tail of FMNH(2) to form 5,6-dimethylbenzimidazole (DMB) and D-erythrose 4-phosphate (E4P). NAD(P)H is only required initially to reduce FMN and oxygen drives the oxidative fragmentation. In Rhodospirillum rubrum (strain ATCC 11170 / ATH 1.1.1 / DSM 467 / LMG 4362 / NCIMB 8255 / S1), this protein is 5,6-dimethylbenzimidazole synthase.